The sequence spans 570 residues: Multidrug and toxin extrusion protein 1 (570 aa).

Met-1 is modified (N-acetylmethionine). Topologically, residues Met-1–Ala-37 are cytoplasmic. Residues Leu-38 to Ile-58 form a helical membrane-spanning segment. The Extracellular portion of the chain corresponds to Ser-59–Asp-72. Residues Ala-73 to Ser-93 traverse the membrane as a helical segment. The Cytoplasmic segment spans residues Ser-94–Ala-120. A helical membrane pass occupies residues Leu-121–Leu-141. Topologically, residues Leu-142–Arg-152 are extracellular. A helical membrane pass occupies residues Leu-153–Leu-173. Residues Gln-174–Lys-176 are Cytoplasmic-facing. A helical membrane pass occupies residues Tyr-177–Val-197. Over Asn-198–Ser-216 the chain is Extracellular. Residues Ala-217–Gly-237 traverse the membrane as a helical segment. Topologically, residues Lys-238–Glu-251 are cytoplasmic. A helical transmembrane segment spans residues Cys-252–Met-272. The Extracellular segment spans residues Glu-273–Gln-295. A helical membrane pass occupies residues Ser-296–Ala-316. Residues Ser-317–Ser-336 lie on the Cytoplasmic side of the membrane. The chain crosses the membrane as a helical span at residues Thr-337–Cys-357. Topologically, residues Lys-358 to Asp-370 are extracellular. The helical transmembrane segment at Ile-371 to Leu-391 threads the bilayer. The Cytoplasmic portion of the chain corresponds to Ala-392–Gly-408. A helical transmembrane segment spans residues Ala-409–Phe-429. Topologically, residues Ala-430–Gly-437 are extracellular. The helical transmembrane segment at Leu-438 to Ile-458 threads the bilayer. The Cytoplasmic portion of the chain corresponds to Gln-459–Arg-546. The segment at Asp-508–Ser-534 is disordered. The segment covering Met-521–Asp-533 has biased composition (basic and acidic residues). The helical transmembrane segment at Gly-547–Val-567 threads the bilayer. The Extracellular segment spans residues Arg-568–Gln-570.

Belongs to the multi antimicrobial extrusion (MATE) (TC 2.A.66.1) family.

The protein resides in the cell membrane. The protein localises to the apical cell membrane. The catalysed reaction is thiamine(out) + H(+)(in) = thiamine(in) + H(+)(out). It carries out the reaction estrone 3-sulfate(in) + H(+)(out) = estrone 3-sulfate(out) + H(+)(in). It catalyses the reaction creatinine(in) + H(+)(out) = creatinine(out) + H(+)(in). The enzyme catalyses agmatine(in) + H(+)(out) = agmatine(out) + H(+)(in). Functionally, multidrug efflux pump that functions as a H(+)/organic cation antiporter. Plays a physiological role in the excretion of cationic compounds including endogenous metabolites, drugs, toxins through the kidney and liver, into urine and bile respectively. Mediates the efflux of endogenous compounds such as creatinine, vitamin B1/thiamine, agmatine and estrone-3-sulfate. May also contribute to regulate the transport of cationic compounds in testis across the blood-testis-barrier. This Pongo abelii (Sumatran orangutan) protein is Multidrug and toxin extrusion protein 1 (SLC47A1).